The sequence spans 140 residues: Large ribosomal subunit protein bL17 (140 aa).

It belongs to the bacterial ribosomal protein bL17 family. Part of the 50S ribosomal subunit. Contacts protein L32.

The sequence is that of Large ribosomal subunit protein bL17 from Gluconobacter oxydans (strain 621H) (Gluconobacter suboxydans).